Reading from the N-terminus, the 188-residue chain is M-phase phosphoprotein 6 homolog (188 aa).

Positions 93–188 are disordered; sequence EENVDEKDVS…NKNKKKKKRN (96 aa). Over residues 120-149 the composition is skewed to basic and acidic residues; the sequence is LTERERRKQELVSKKAEASRKMEVKAPAKE. Residue S167 is modified to Phosphoserine. The span at 174 to 188 shows a compositional bias: basic residues; that stretch reads RKTKKNKNKKKKKRN.

The protein belongs to the MPP6 family. As to quaternary structure, associates with the RNA exosome complex.

It is found in the nucleus. RNA-binding protein that associates with the RNA exosome complex. This Schizosaccharomyces pombe (strain 972 / ATCC 24843) (Fission yeast) protein is M-phase phosphoprotein 6 homolog.